The sequence spans 435 residues: Hydrogenobyrinate a,c-diamide synthase (435 aa).

The 189-residue stretch at Arg-247–Gly-435 folds into the GATase cobBQ-type domain. Catalysis depends on Cys-329, which acts as the Nucleophile.

It belongs to the CobB/CbiA family. It depends on Mg(2+) as a cofactor.

The enzyme catalyses hydrogenobyrinate + 2 L-glutamine + 2 ATP + 2 H2O = hydrogenobyrinate a,c-diamide + 2 L-glutamate + 2 ADP + 2 phosphate + 2 H(+). It functions in the pathway cofactor biosynthesis; adenosylcobalamin biosynthesis; cob(II)yrinate a,c-diamide from precorrin-2 (aerobic route): step 9/10. In terms of biological role, catalyzes the ATP-dependent amidation of the two carboxylate groups at positions a and c of hydrogenobyrinate, using either L-glutamine or ammonia as the nitrogen source. The chain is Hydrogenobyrinate a,c-diamide synthase from Rhodobacter capsulatus (strain ATCC BAA-309 / NBRC 16581 / SB1003).